Here is a 158-residue protein sequence, read N- to C-terminus: Protein Smg homolog (158 aa).

It belongs to the Smg family.

The chain is Protein Smg homolog from Thioalkalivibrio sulfidiphilus (strain HL-EbGR7).